The following is a 216-amino-acid chain: Glutathione S-transferase D5 (216 aa).

In terms of domain architecture, GST N-terminal spans 1 to 80 (MDFYYSPRGS…YLVEKYGKDD (80 aa)). Glutathione-binding positions include 50–52 (HTI) and 64–66 (ESR). A GST C-terminal domain is found at 86–207 (DPKKQALVNQ…KGAVELKGVF (122 aa)).

Belongs to the GST superfamily. Delta family. As to quaternary structure, homodimer.

It catalyses the reaction RX + glutathione = an S-substituted glutathione + a halide anion + H(+). Conjugation of reduced glutathione to a wide number of exogenous and endogenous hydrophobic electrophiles. May be involved in detoxification. This Drosophila melanogaster (Fruit fly) protein is Glutathione S-transferase D5.